Consider the following 182-residue polypeptide: Oligoribonuclease (182 aa).

The Exonuclease domain occupies 8-171 (LIWIDLEMTG…DDIRESIKEL (164 aa)). Tyr129 is an active-site residue.

The protein belongs to the oligoribonuclease family.

It localises to the cytoplasm. In terms of biological role, 3'-to-5' exoribonuclease specific for small oligoribonucleotides. This Actinobacillus succinogenes (strain ATCC 55618 / DSM 22257 / CCUG 43843 / 130Z) protein is Oligoribonuclease.